We begin with the raw amino-acid sequence, 875 residues long: uncharacterized protein (875 aa).

The tract at residues proline 83–leucine 149 is disordered. Pro residues predominate over residues glutamine 101–glutamine 147.

This is an uncharacterized protein from Orgyia pseudotsugata multicapsid polyhedrosis virus (OpMNPV).